The chain runs to 554 residues: Exodeoxyribonuclease 7 large subunit (554 aa).

The protein belongs to the XseA family. As to quaternary structure, heterooligomer composed of large and small subunits.

The protein localises to the cytoplasm. The enzyme catalyses Exonucleolytic cleavage in either 5'- to 3'- or 3'- to 5'-direction to yield nucleoside 5'-phosphates.. In terms of biological role, bidirectionally degrades single-stranded DNA into large acid-insoluble oligonucleotides, which are then degraded further into small acid-soluble oligonucleotides. This is Exodeoxyribonuclease 7 large subunit from Chlamydia pneumoniae (Chlamydophila pneumoniae).